The sequence spans 333 residues: MNDTLALLQKFNAHPDSRCWYVAWNPKGTLLASCGGDRTIRIWGREGDSWECKTVLQDGHQRTVRKVAWSPCGNYLASASFDATTCIWKKKNDDFECLTVLEGHENEVKCVAWAPSGNLLATCSRDKSVWIWEVDEENEYECVSVVNSHTQDVKHVVWHPTQELLASCSYDNNVCVYKEEDDDWECRATLEGHTSTVWGLTFDPSGQRLASCSDDCTVKIWKECQPEGGQEGTDAAWKCVCTLSGFHGRTVYDIAWCPLTGALATACGDDGVRVFKEDETADPDQPAFSLSAHVPKAHTQDVNCIAWHPKEAGLLVSCSDNGEIAVWNYQSGV.

WD repeat units follow at residues 14 to 53, 59 to 98, 103 to 142, 148 to 187, 192 to 231, 246 to 285, and 297 to 333; these read HPDSRCWYVAWNPKGTLLASCGGDRTIRIWGREGDSWECK, GHQRTVRKVAWSPCGNYLASASFDATTCIWKKKNDDFECL, GHENEVKCVAWAPSGNLLATCSRDKSVWIWEVDEENEYEC, SHTQDVKHVVWHPTQELLASCSYDNNVCVYKEEDDDWECR, GHTSTVWGLTFDPSGQRLASCSDDCTVKIWKECQPEGGQE, FHGRTVYDIAWCPLTGALATACGDDGVRVFKEDETADPDQ, and AHTQDVNCIAWHPKEAGLLVSCSDNGEIAVWNYQSGV.

This sequence belongs to the WD repeat CIA1 family. As to quaternary structure, component of the CIA complex.

Functionally, key component of the cytosolic iron-sulfur protein assembly (CIA) complex, a multiprotein complex that mediates the incorporation of iron-sulfur cluster into extramitochondrial Fe/S proteins. This chain is Probable cytosolic iron-sulfur protein assembly protein ciao1-B (ciao1b), found in Salmo salar (Atlantic salmon).